Consider the following 291-residue polypeptide: Diaminopimelate epimerase (291 aa).

Residues N17, Q50, and N70 each contribute to the substrate site. Residue C79 is the Proton donor of the active site. Residues 80-81 (GN), N167, N200, and 218-219 (ER) contribute to the substrate site. Catalysis depends on C227, which acts as the Proton acceptor. A substrate-binding site is contributed by 228-229 (GS).

Belongs to the diaminopimelate epimerase family. As to quaternary structure, homodimer.

The protein resides in the cytoplasm. The catalysed reaction is (2S,6S)-2,6-diaminopimelate = meso-2,6-diaminopimelate. It functions in the pathway amino-acid biosynthesis; L-lysine biosynthesis via DAP pathway; DL-2,6-diaminopimelate from LL-2,6-diaminopimelate: step 1/1. In terms of biological role, catalyzes the stereoinversion of LL-2,6-diaminopimelate (L,L-DAP) to meso-diaminopimelate (meso-DAP), a precursor of L-lysine and an essential component of the bacterial peptidoglycan. The protein is Diaminopimelate epimerase of Bradyrhizobium diazoefficiens (strain JCM 10833 / BCRC 13528 / IAM 13628 / NBRC 14792 / USDA 110).